Here is a 184-residue protein sequence, read N- to C-terminus: Elongation factor P (184 aa).

Belongs to the elongation factor P family.

Its subcellular location is the cytoplasm. It participates in protein biosynthesis; polypeptide chain elongation. Its function is as follows. Involved in peptide bond synthesis. Stimulates efficient translation and peptide-bond synthesis on native or reconstituted 70S ribosomes in vitro. Probably functions indirectly by altering the affinity of the ribosome for aminoacyl-tRNA, thus increasing their reactivity as acceptors for peptidyl transferase. This is Elongation factor P from Paracidovorax citrulli (strain AAC00-1) (Acidovorax citrulli).